The sequence spans 3019 residues: Genome polyprotein (3019 aa).

An N-acetylserine; by host modification is found at serine 2. The interaction with STAT1 stretch occupies residues 2-23; that stretch reads STLPKPQRITKRNINRRPQDVK. Residues 2–58 form an interaction with EIF2AK2/PKR region; that stretch reads STLPKPQRITKRNINRRPQDVKFPGGGQIVGGVYVLPRRGPKLGVRAVRKTSERSQP. Residues 2 to 59 are interaction with DDX3X; that stretch reads STLPKPQRITKRNINRRPQDVKFPGGGQIVGGVYVLPRRGPKLGVRAVRKTSERSQPR. The interval 2 to 75 is disordered; it reads STLPKPQRIT…PRARRTEGRS (74 aa). At 2 to 168 the chain is on the cytoplasmic side; the sequence is STLPKPQRIT…EDGINFATGN (167 aa). Short sequence motifs (nuclear localization signal) lie at residues 5–13 and 38–43; these read PKPQRITKR and PRRGPK. Phosphoserine; by host is present on serine 53. 2 consecutive short sequence motifs (nuclear localization signal) follow at residues 58-64 and 66-71; these read PRSRRQP and PRARRT. Residues 58–68 show a composition bias toward basic residues; that stretch reads PRSRRQPIPRA. Phosphoserine; by host occurs at positions 99 and 116. Positions 112 to 152 are important for endoplasmic reticulum and mitochondrial localization; sequence PRRRSRNLGKVIDTLTCGFADLMGYIPLVGAPVGGVARALA. The tract at residues 122 to 173 is interaction with APOA2; sequence VIDTLTCGFADLMGYIPLVGAPVGGVARALAHGVRALEDGINFATGNLPGCS. The tract at residues 164–167 is important for lipid droplets localization; it reads FATG. Residues 169 to 189 form a helical membrane-spanning segment; the sequence is LPGCSFSIFLLALLSCLLTPT. The propeptide at 178 to 191 is ER anchor for the core protein, removed in mature form by host signal peptidase; that stretch reads LLALLSCLLTPTAG. Topologically, residues 190 to 358 are lumenal; it reads AGLEYRNASG…IGAHWGVMAG (169 aa). Asparagine 196, asparagine 209, and asparagine 234 each carry an N-linked (GlcNAc...) asparagine; by host glycan. Positions 265 to 296 are important for fusion; the sequence is MVGAATLCSALYVGDLCGALFLVGQGFSWRHR. N-linked (GlcNAc...) asparagine; by host glycosylation occurs at asparagine 305. Residues 359-379 form a helical membrane-spanning segment; the sequence is VAYYSMQGNWAKVFLVLCLFS. Topologically, residues 380-730 are lumenal; sequence GVDASTTITG…WEFVILIFLL (351 aa). An HVR1 region spans residues 385-412; that stretch reads TTITGGVAASGAFTITSLFSTGAKQPLH. N-linked (GlcNAc...) (high mannose) asparagine; by host glycans are attached at residues asparagine 417, asparagine 423, and asparagine 430. 4 disulfides stabilise this stretch: cysteine 429-cysteine 553, cysteine 452-cysteine 459, cysteine 487-cysteine 495, and cysteine 504-cysteine 509. N-linked (GlcNAc...) asparagine; by host glycosylation occurs at asparagine 448. The segment at 475-479 is HVR2; that stretch reads ANISG. Residue asparagine 476 is glycosylated (N-linked (GlcNAc...) asparagine; by host). The tract at residues 481–494 is CD81-binding 1; it reads SSEKPYCWHYAPRP. N-linked (GlcNAc...) asparagine; by host glycosylation is present at asparagine 533. The interval 545–552 is CD81-binding 2; it reads PPTEPWFG. An N-linked (GlcNAc...) asparagine; by host glycan is attached at asparagine 557. Cystine bridges form between cysteine 565/cysteine 570, cysteine 586/cysteine 590, cysteine 602/cysteine 625, and cysteine 612/cysteine 649. Residues asparagine 628 and asparagine 650 are each glycosylated (N-linked (GlcNAc...) (high mannose) asparagine; by host). Cysteine 657 and cysteine 682 are oxidised to a cystine. Positions 665-676 are PKR/eIF2-alpha phosphorylation homology domain (PePHD); sequence SEMYPLLHSTTE. The helical transmembrane segment at 731–751 threads the bilayer; the sequence is LADARVCVVLWMMMLISQAEA. Topologically, residues 752 to 762 are lumenal; the sequence is ALENLIVLNAI. A helical transmembrane segment spans residues 763–783; the sequence is SAAGTHGIWWSLVAFCVAWHV. Over 784–786 the chain is Cytoplasmic; it reads RGR. Residues 787–808 form a helical membrane-spanning segment; sequence IFPIAVYSIVGLWPLLLLVLML. The Lumenal segment spans residues 809 to 818; it reads PYRAYAWTGT. The chain crosses the membrane as a helical span at residues 819–839; the sequence is DTSTLGAGVLSLFALFTLSPW. The Cytoplasmic portion of the chain corresponds to 840–843; sequence YKHW. Residues 844 to 863 traverse the membrane as a helical segment; sequence IARLIWWNQYTIARCEAALQ. Residues 864 to 886 are Lumenal-facing; that stretch reads IWVPPLLARGARDGIILLAGLFY. Residues 887–907 form a helical membrane-spanning segment; the sequence is PALVFDITKLLLAILGPLYIL. In terms of domain architecture, Peptidase C18 spans 908 to 1031; the sequence is QASLVRVPYF…DYRSMGWRLL (124 aa). The Cytoplasmic segment spans residues 908–1662; sequence QASLVRVPYF…CMAADLEVAT (755 aa). Positions 909–1211 are protease NS2-3; the sequence is ASLVRVPYFV…PVESLSAQTR (303 aa). Cysteine 927 is lipidated: S-palmitoyl cysteine; by host. An interaction with host SCPS1 region spans residues 934-954; sequence TGGKYVQMVLLALARGFNTYL. Active-site for protease NS2 activity; shared with dimeric partner residues include histidine 957, glutamate 977, and cysteine 998. One can recognise a Peptidase S29 domain in the interval 1032-1213; sequence APITAHAQQT…ESLSAQTRSP (182 aa). Catalysis depends on charge relay system; for serine protease NS3 activity residues histidine 1088 and aspartate 1112. Zn(2+)-binding residues include cysteine 1128 and cysteine 1130. Serine 1170 (charge relay system; for serine protease NS3 activity) is an active-site residue. Zn(2+)-binding residues include cysteine 1176 and histidine 1180. 1235 to 1242 provides a ligand contact to ATP; that stretch reads APTGSGES. Positions 1242 and 1322 each coordinate Mg(2+). Positions 1321–1324 match the DECH box motif; that stretch reads DECH. A Helicase C-terminal domain is found at 1366–1543; it reads NIEEVALTGE…ELTPSETTVR (178 aa). The tract at residues 1482–1505 is disordered; it reads VPQDAVSRSQRRGRTGRGKSGTYR. The tract at residues 1491–1503 is RNA-binding; the sequence is QRRGRTGRGKSGT. Residues 1663–1683 traverse the membrane as a helical segment; the sequence is SAWVLLGGVMAALTAYCLSVG. Residues 1684–1695 are NS3-binding; it reads SVVIVGHLVLGG. Residues 1684–1810 are Cytoplasmic-facing; that stretch reads SVVIVGHLVL…SVTSPLTTNQ (127 aa). The helical transmembrane segment at 1811-1829 threads the bilayer; that stretch reads TLLFNIMGGWVASNLAPPP. Residues 1830–1833 are Lumenal-facing; sequence ASTA. Residues 1834–1854 form a helical membrane-spanning segment; the sequence is FVVSGLAGAAVGSIGLGKVLL. Aspartate 1855 is a topological domain (cytoplasmic). The chain crosses the membrane as a helical span at residues 1856-1876; the sequence is ILAGYGAGVAGALVAFKIMGG. Residues 1877-1886 are Lumenal-facing; sequence EMPSTEDMVN. The chain crosses the membrane as a helical span at residues 1887-1907; sequence LLPAILSPGALVVGVICAAIL. Residues 1908–1977 are Cytoplasmic-facing; sequence RRHVGPGEGA…WINEDYPTPC (70 aa). Cysteine 1977 carries the S-palmitoyl cysteine; by host lipid modification. An intramembrane segment occupies 1978 to 2007; that stretch reads DGNWLYDIWNWVCTVLADFKLWLGAKILPK. The Cytoplasmic portion of the chain corresponds to 2008-2998; that stretch reads MPGIPFLSCQ…YHSVSRARSR (991 aa). Positions 2016, 2034, 2036, and 2057 each coordinate Zn(2+). The tract at residues 2125-2213 is FKBP8-binding; it reads EFFTELDGVR…ASSSASQLSA (89 aa). A transcriptional activation region spans residues 2125-2337; sequence EFFTELDGVR…PVPPPRRKRT (213 aa). Positions 2140–2144 are interaction with non-structural protein 4A; that stretch reads PVCRP. The segment at 2191-2225 is disordered; that stretch reads AKRRLDRGSPPSLASSSASQLSAPSRKATCTTHGR. Residues 2194 to 2446 form an interaction with host SKP2 region; sequence RLDRGSPPSL…ALITPCAAEE (253 aa). Residues serine 2199, serine 2202, serine 2206, serine 2209, serine 2212, and serine 2215 each carry the phosphoserine; by host modification. Positions 2199-2215 are enriched in low complexity; that stretch reads SPPSLASSSASQLSAPS. An ISDR region spans residues 2215-2254; the sequence is SRKATCTTHGRHPDAELITANLLWRQEMGSNITRVESESK. The interaction with EIF2AK2/PKR stretch occupies residues 2215–2280; sequence SRKATCTTHG…DELSVAAECF (66 aa). Positions 2254 to 2311 are NS4B-binding; the sequence is KVVILDSFEPLRACDDEDELSVAAECFKKPPKYPPALPIWARPDYNPPLVEPWKDPDY. The segment at 2304 to 2382 is V3; the sequence is EPWKDPDYVP…GTQSGSLTGP (79 aa). An SH3-binding motif is present at residues 2327–2330; it reads PPVP. The Nuclear localization signal motif lies at 2332-2340; sequence PRRKRTIVL. A Glycyl lysine isopeptide (Lys-Gly) (interchain with G-Cter in ubiquitin) cross-link involves residue lysine 2355. Residues 2356–2417 form a disordered region; sequence SFPQPTCSAE…PDLSSGSWST (62 aa). The segment covering 2369 to 2381 has biased composition (polar residues); the sequence is TSGVGTQSGSLTG. A phosphoserine; by host mark is found at serine 2457 and serine 2470. Positions 2642–2760 constitute a RdRp catalytic domain; that stretch reads PLGFSYDTRC…IAESAGIDED (119 aa). Positions 2648, 2746, and 2747 each coordinate Mg(2+). Residues 2999-3019 form a helical membrane-spanning segment; it reads HLLLGLLLLTVGVGIFLLPAR.

It belongs to the hepacivirus polyprotein family. As to quaternary structure, homooligomer. Interacts with E1 (via C-terminus). Interacts with the non-structural protein 5A. Interacts (via N-terminus) with host STAT1 (via SH2 domain); this interaction results in decreased STAT1 phosphorylation and ubiquitin-mediated proteasome-dependent STAT1 degradation, leading to decreased IFN-stimulated gene transcription. Interacts with host STAT3; this interaction constitutively activates STAT3. Interacts with host LTBR receptor. Interacts with host TNFRSF1A receptor and possibly induces apoptosis. Interacts with host HNRPK. Interacts with host YWHAE. Interacts with host UBE3A/E6AP. Interacts with host DDX3X. Interacts with host APOA2. Interacts with host RXRA protein. Interacts with host SP110 isoform 3/Sp110b; this interaction sequesters the transcriptional corepressor SP110 away from the nucleus. Interacts with host CREB3 nuclear transcription protein; this interaction triggers cell transformation. Interacts with host ACY3. Interacts with host C1QR1. Interacts with host RBM24; this interaction, which enhances the interaction of the mature core protein with 5'-UTR, may inhibit viral translation and favor replication. Interacts with host EIF2AK2/PKR; this interaction induces the autophosphorylation of EIF2AK2. Part of the viral assembly initiation complex composed of NS2, E1, E2, NS3, NS4A, NS5A and the mature core protein. In terms of assembly, forms a heterodimer with envelope glycoprotein E2. Interacts with mature core protein. Interacts with protease NS2. The heterodimer E1/E2 interacts with host CLDN1; this interaction plays a role in viral entry into host cell. Interacts with host SPSB2 (via C-terminus). Part of the viral assembly initiation complex composed of NS2, E1, E2, NS3, NS4A, NS5A and the mature core protein. Interacts with host NEURL3; this interaction prevents E1 binding to glycoprotein E2. Forms a heterodimer with envelope glycoprotein E1. Interacts with host CD81 and SCARB1 receptors; these interactions play a role in viral entry into host cell. Interacts with host EIF2AK2/PKR; this interaction inhibits EIF2AK2 and probably allows the virus to evade the innate immune response. Interacts with host CD209/DC-SIGN and CLEC4M/DC-SIGNR. Interact with host SPCS1; this interaction is essential for viral particle assembly. Interacts with protease NS2. The heterodimer E1/E2 interacts with host CLDN1; this interaction plays a role in viral entry into host cell. Part of the viral assembly initiation complex composed of NS2, E1, E2, NS3, NS4A, NS5A and the mature core protein. Interacts with host SLC3A2/4F2hc; the interaction may facilitate viral entry into host cell. Interacts with human PLSCR1. As to quaternary structure, homohexamer. Homoheptamer. Interacts with protease NS2. In terms of assembly, homodimer. Interacts with host SPCS1; this interaction is essential for viral particle assembly. Interacts with envelope glycoprotein E1. Interacts with envelope glycoprotein E2. Interacts with viroporin p7. Interacts with serine protease/helicase NS3. Part of the replication complex composed of NS2, NS3, NS4A, NS4B, NS5A and the RNA-directed RNA polymerase embedded in an ER-derived membranous web. Part of the viral assembly initiation complex composed of NS2, E1, E2, NS3, NS4A, NS5A and the mature core protein. Interacts with protease NS2. Interacts with non-structural protein 4A; this interaction stabilizes the folding of NS3 serine protease. NS3-NS4A interaction is essential for NS3 activation and allows membrane anchorage of the latter. NS3/NS4A complex also prevents phosphorylation of host IRF3, thus preventing the establishment of dsRNA induced antiviral state. Interacts with host MAVS; this interaction leads to the cleavage and inhibition of host MAVS. Interacts with host TICAM1; this interaction leads to the cleavage and inhibition of host TICAM1. Interacts with host TANK-binding kinase/TBK1; this interaction results in the inhibition of the association between TBK1 and IRF3, which leads to the inhibition of IRF3 activation. Interacts with host RBM24. Part of the replication complex composed of NS2, NS3, NS4A, NS4B, NS5A and the RNA-directed RNA polymerase embedded in an ER-derived membranous web. Part of the viral assembly initiation complex composed of NS2, E1, E2, NS3, NS4A, NS5A and the mature core protein. As to quaternary structure, interacts with NS3 serine protease; this interaction stabilizes the folding of NS3 serine protease. NS3-NS4A interaction is essential for NS3 activation and allows membrane anchorage of the latter. Interacts with non-structural protein 5A (via N-terminus). Part of the replication complex composed of NS2, NS3, NS4A, NS4B, NS5A and the RNA-directed RNA polymerase embedded in an ER-derived membranous web. Part of the viral assembly initiation complex composed of NS2, E1, E2, NS3, NS4A, NS5A and the mature core protein. In terms of assembly, homomultimer. Interacts with non-structural protein NS5A. Interacts with host PLA2G4C; this interaction likely initiates the recruitment of replication complexes to lipid droplets. Interacts with host STING; this interaction disrupts the interaction between STING and TBK1 thereby suppressing the interferon signaling. Part of the replication complex composed of NS2, NS3, NS4A, NS4B, NS5A and the RNA-directed RNA polymerase embedded in an ER-derived membranous web. Monomer. Homodimer; dimerization is required for RNA-binding. Interacts with the mature core protein. Interacts (via N-terminus) with non-structural protein 4A. Interacts with non-structural protein 4B. Interacts (via region D2) with RNA-directed RNA polymerase. Part of the viral assembly initiation complex composed of NS2, E1, E2, NS3, NS4A, NS5A and the mature core protein. Part of the replication complex composed of NS2, NS3, NS4A, NS4B, NS5A and the RNA-directed RNA polymerase embedded in an ER-derived membranous web. Interacts with host GRB2. Interacts with host BIN1. Interacts with host PIK3R1. Interacts with host SRCAP. Interacts with host FKBP8. Interacts (via C-terminus) with host VAPB (via MSP domain). Interacts with host EIF2AK2/PKR; this interaction leads to disruption of EIF2AK2 dimerization by NS5A and probably allows the virus to evade the innate immune response. Interacts (via N-terminus) with host PACSIN2 (via N-terminus); this interaction attenuates protein kinase C alpha-mediated phosphorylation of PACSIN2 by disrupting the interaction between PACSIN2 and PRKCA. Interacts (via N-terminus) with host SRC kinase (via SH2 domain). Interacts with most Src-family kinases. Interacts with host IFI27 and SKP2; promotes the ubiquitin-mediated proteasomal degradation of NS5A. Interacts with host GPS2. Interacts with host TNFRSF21; this interaction allows the modulation by the virus of JNK, p38 MAPK, STAT3, and Akt signaling pathways in a DR6-dependent manner. Interacts (via N-terminus) with host CIDEB (via N-terminus); this interaction seems to regulate the association of HCV particles with APOE. Interacts with host CHKA/Choline Kinase-alpha; CHKA bridges host PI4KA and NS5A and potentiates NS5A-stimulated PI4KA activity, which then facilitates the targeting of the ternary complex to the ER for viral replication. Interacts with host SPSB2 (via C-terminus); this interaction targets NS5A for ubiquitination and degradation. Interacts with host RAB18; this interaction may promote the association of NS5A and other replicase components with lipid droplets. Interacts (via region D2) with host PPIA/CYPA; the interaction stimulates RNA-binding ability of NS5A and is dependent on the peptidyl-prolyl cis-trans isomerase activity of PPIA/CYPA. Interacts with host TRIM14; this interaction induces the degradation of NS5A. As to quaternary structure, homooligomer. Interacts with non-structural protein 5A. Interacts with host VAPB. Interacts with host PRK2/PKN2. Interacts with host HNRNPA1 and SEPT6; these interactions facilitate viral replication. Part of the replication complex composed of NS2, NS3, NS4A, NS4B, NS5A and the RNA-directed RNA polymerase. Zn(2+) is required as a cofactor. Mg(2+) serves as cofactor. Specific enzymatic cleavages in vivo yield mature proteins. The structural proteins, core, E1, E2 and p7 are produced by proteolytic processing by host signal peptidases. The core protein precursor is synthesized as a 23 kDa, which is retained in the ER membrane through the hydrophobic signal peptide. Cleavage by the signal peptidase releases the 21 kDa mature core protein. The cleavage of the core protein precursor occurs between aminoacids 176 and 188 but the exact cleavage site is not known. Some degraded forms of the core protein appear as well during the course of infection. The other proteins (p7, NS2, NS3, NS4A, NS4B, NS5A and NS5B) are cleaved by the viral proteases. Autoprocessing between NS2 and NS3 is mediated by the NS2 cysteine protease catalytic domain and regulated by the NS3 N-terminal domain. In terms of processing, phosphorylated by host PKC and PKA. Post-translationally, ubiquitinated; mediated by UBE3A and leading to core protein subsequent proteasomal degradation. Highly N-glycosylated. In terms of processing, palmitoylation is required for NS2/3 autoprocessing and E2 recruitment to membranes. Post-translationally, palmitoylated. This modification may play a role in its polymerization or in protein-protein interactions. Phosphorylated on serines in a basal form termed p56. p58 is a hyperphosphorylated form of p56. p56 and p58 coexist in the cell in roughly equivalent amounts. Hyperphosphorylation is dependent on the presence of NS4A. Host CSNK1A1/CKI-alpha or RPS6KB1 kinases may be responsible for NS5A phosphorylation. In terms of processing, tyrosine phosphorylation is essential for the interaction with host SRC. Post-translationally, ubiquitinated. Ubiquitination, most probably at Lys-2355, mediated by host IFI27 and SKP2 leads to proteasomal degradation, restricting viral infection. Ubiquitination by host TRIM22 leads to interruption of viral replication. The N-terminus is phosphorylated by host PRK2/PKN2.

The protein localises to the host endoplasmic reticulum membrane. The protein resides in the host mitochondrion membrane. Its subcellular location is the virion. It is found in the host cytoplasm. It localises to the host nucleus. The protein localises to the host lipid droplet. The protein resides in the virion membrane. Its subcellular location is the host mitochondrion. It is found in the host cell membrane. It localises to the host perinuclear region. It carries out the reaction Hydrolysis of four peptide bonds in the viral precursor polyprotein, commonly with Asp or Glu in the P6 position, Cys or Thr in P1 and Ser or Ala in P1'.. It catalyses the reaction a ribonucleoside 5'-triphosphate + H2O = a ribonucleoside 5'-diphosphate + phosphate + H(+). The catalysed reaction is ATP + H2O = ADP + phosphate + H(+). The enzyme catalyses RNA(n) + a ribonucleoside 5'-triphosphate = RNA(n+1) + diphosphate. With respect to regulation, inhibited by the antiviral drug hexamethylene amiloride. Inhibition by amantadine appears to be genotype-dependent. Also inhibited by long-alkyl-chain iminosugar derivatives. Its activity is regulated as follows. Activity is up-regulated by PRK2/PKN2-mediated phosphorylation. In terms of biological role, packages viral RNA to form a viral nucleocapsid, and promotes virion budding. Participates in the viral particle production as a result of its interaction with the non-structural protein 5A. Binds RNA and may function as a RNA chaperone to induce the RNA structural rearrangements taking place during virus replication. Modulates viral translation initiation by interacting with viral IRES and 40S ribosomal subunit. Affects various cell signaling pathways, host immunity and lipid metabolism. Prevents the establishment of cellular antiviral state by blocking the interferon-alpha/beta (IFN-alpha/beta) and IFN-gamma signaling pathways and by blocking the formation of phosphorylated STAT1 and promoting ubiquitin-mediated proteasome-dependent degradation of STAT1. Activates STAT3 leading to cellular transformation. Regulates the activity of cellular genes, including c-myc and c-fos. May repress the promoter of p53, and sequester CREB3 and SP110 isoform 3/Sp110b in the cytoplasm. Represses cell cycle negative regulating factor CDKN1A, thereby interrupting an important check point of normal cell cycle regulation. Targets transcription factors involved in the regulation of inflammatory responses and in the immune response: suppresses TNF-induced NF-kappa-B activation, and activates AP-1. Binds to dendritic cells (DCs) via C1QR1, resulting in down-regulation of T-lymphocytes proliferation. Alters lipid metabolism by interacting with hepatocellular proteins involved in lipid accumulation and storage. Induces up-regulation of FAS promoter activity, and thereby contributes to the increased triglyceride accumulation in hepatocytes (steatosis). Functionally, forms a heterodimer with envelope glycoprotein E2, which mediates virus attachment to the host cell, virion internalization through clathrin-dependent endocytosis and fusion with host membrane. Fusion with the host cell is most likely mediated by both E1 and E2, through conformational rearrangements of the heterodimer required for fusion rather than a classical class II fusion mechanism. E1/E2 heterodimer binds host apolipoproteins such as APOB and ApoE thereby forming a lipo-viro-particle (LVP). APOE associated to the LVP allows the initial virus attachment to cell surface receptors such as the heparan sulfate proteoglycans (HSPGs), syndecan-1 (SDC1), syndecan-1 (SDC2), the low-density lipoprotein receptor (LDLR) and scavenger receptor class B type I (SCARB1). The cholesterol transfer activity of SCARB1 allows E2 exposure and binding of E2 to SCARB1 and the tetraspanin CD81. E1/E2 heterodimer binding on CD81 activates the epithelial growth factor receptor (EGFR) signaling pathway. Diffusion of the complex E1-E2-EGFR-SCARB1-CD81 to the cell lateral membrane allows further interaction with Claudin 1 (CLDN1) and occludin (OCLN) to finally trigger HCV entry. Its function is as follows. Forms a heterodimer with envelope glycoprotein E1, which mediates virus attachment to the host cell, virion internalization through clathrin-dependent endocytosis and fusion with host membrane. Fusion with the host cell is most likely mediated by both E1 and E2, through conformational rearrangements of the heterodimer required for fusion rather than a classical class II fusion mechanism. The interaction between envelope glycoprotein E2 and host apolipoprotein E/APOE allows the proper assembly, maturation and infectivity of the viral particles. This interaction is probably promoted via the up-regulation of cellular autophagy by the virus. E1/E2 heterodimer binds host apolipoproteins such as APOB and APOE thereby forming a lipo-viro-particle (LVP). APOE associated to the LVP allows the initial virus attachment to cell surface receptors such as the heparan sulfate proteoglycans (HSPGs), syndecan-1 (SDC1), syndecan-1 (SDC2), the low-density lipoprotein receptor (LDLR) and scavenger receptor class B type I (SCARB1). The cholesterol transfer activity of SCARB1 allows E2 exposure and binding of E2 to SCARB1 and the tetraspanin CD81. E1/E2 heterodimer binding on CD81 activates the epithelial growth factor receptor (EGFR) signaling pathway. Diffusion of the complex E1-E2-EGFR-SCARB1-CD81 to the cell lateral membrane allows further interaction with Claudin 1 (CLDN1) and occludin (OCLN) to finally trigger HCV entry. Inhibits host EIF2AK2/PKR activation, preventing the establishment of an antiviral state. Viral ligand for CD209/DC-SIGN and CLEC4M/DC-SIGNR, which are respectively found on dendritic cells (DCs), and on liver sinusoidal endothelial cells and macrophage-like cells of lymph node sinuses. These interactions allow the capture of circulating HCV particles by these cells and subsequent facilitated transmission to permissive cells such as hepatocytes and lymphocyte subpopulations. The interaction between E2 and host amino acid transporter complex formed by SLC3A2 and SLC7A5/LAT1 may facilitate viral entry into host cell. Ion channel protein that acts as a viroporin and plays an essential role in the assembly, envelopment and secretion of viral particles. Regulates the host cell secretory pathway, which induces the intracellular retention of viral glycoproteins and favors assembly of viral particles. Creates a pore in acidic organelles and releases Ca(2+) and H(+) in the cytoplasm of infected cells, leading to a productive viral infection. High levels of cytoplasmic Ca(2+) may trigger membrane trafficking and transport of viral ER-associated proteins to viroplasms, sites of viral genome replication. This ionic imbalance induces the assembly of the inflammasome complex, which triggers the maturation of pro-IL-1beta into IL-1beta through the action of caspase-1. Targets also host mitochondria and induces mitochondrial depolarization. In addition of its role as a viroporin, acts as a lipid raft adhesion factor. In terms of biological role, cysteine protease required for the proteolytic auto-cleavage between the non-structural proteins NS2 and NS3. The N-terminus of NS3 is required for the function of NS2 protease (active region NS2-3). Promotes the initiation of viral particle assembly by mediating the interaction between structural and non-structural proteins. Functionally, displays three enzymatic activities: serine protease with a chymotrypsin-like fold, NTPase and RNA helicase. NS3 serine protease, in association with NS4A, is responsible for the cleavages of NS3-NS4A, NS4A-NS4B, NS4B-NS5A and NS5A-NS5B. The NS3/NS4A complex prevents phosphorylation of host IRF3, thus preventing the establishment of dsRNA induced antiviral state. The NS3/NS4A complex induces host amino acid transporter component SLC3A2, thus contributing to HCV propagation. NS3 RNA helicase binds to RNA and unwinds both dsDNA and dsRNA in the 3' to 5' direction, and likely resolves RNA complicated stable secondary structures in the template strand. Binds a single ATP and catalyzes the unzipping of a single base pair of dsRNA. Inhibits host antiviral proteins TBK1 and IRF3 thereby preventing the establishment of an antiviral state. Cleaves host MAVS/CARDIF thereby preventing the establishment of an antiviral state. Cleaves host TICAM1/TRIF, thereby disrupting TLR3 signaling and preventing the establishment of an antiviral state. Its function is as follows. Induces a specific membrane alteration that serves as a scaffold for the virus replication complex. This membrane alteration gives rise to the so-called ER-derived membranous web that contains the replication complex. NS4B self-interaction contributes to its function in membranous web formation. Promotes host TRIF protein degradation in a CASP8-dependent manner thereby inhibiting host TLR3-mediated interferon signaling. Disrupts the interaction between STING and TBK1 contributing to the inhibition of interferon signaling. Phosphorylated protein that is indispensable for viral replication and assembly. Both hypo- and hyperphosphorylated states are required for the viral life cycle. The hyperphosphorylated form of NS5A is an inhibitor of viral replication. Involved in RNA-binding and especially in binding to the viral genome. Zinc is essential for RNA-binding. Participates in the viral particle production as a result of its interaction with the mature viral core protein. Its interaction with host VAPB may target the viral replication complex to vesicles. Down-regulates viral IRES translation initiation. Mediates interferon resistance, presumably by interacting with and inhibiting host EIF2AK2/PKR. Prevents BIN1-induced apoptosis. Acts as a transcriptional activator of some host genes important for viral replication when localized in the nucleus. Via the interaction with host PACSIN2, modulates lipid droplet formation in order to promote virion assembly. Modulates TNFRSF21/DR6 signaling pathway for viral propagation. In terms of biological role, RNA-dependent RNA polymerase that performs primer-template recognition and RNA synthesis during viral replication. Initiates RNA transcription/replication at a flavin adenine dinucleotide (FAD), resulting in a 5'- FAD cap on viral RNAs. In this way, recognition of viral 5' RNA by host pattern recognition receptors can be bypassed, thereby evading activation of antiviral pathways. The chain is Genome polyprotein from Homo sapiens (Human).